The chain runs to 150 residues: Ribonuclease K6 (150 aa).

A signal peptide spans 1–23 (MVLCFPLLLLLLVLWGPVCLLHA). His-38 functions as the Proton acceptor in the catalytic mechanism. Cystine bridges form between Cys-46-Cys-104, Cys-60-Cys-114, Cys-78-Cys-129, and Cys-85-Cys-92. N-linked (GlcNAc...) asparagine glycosylation is present at Asn-55. Substrate contacts are provided by residues 61 to 65 (KHQNT) and Lys-86. Asn-100 carries an N-linked (GlcNAc...) asparagine glycan. Residue Arg-105 coordinates substrate. His-145 serves as the catalytic Proton donor.

The protein belongs to the pancreatic ribonuclease family. As to quaternary structure, interacts (via N-terminus) with bacterial lipopolysaccharide (LPS).

It localises to the secreted. The protein resides in the lysosome. The protein localises to the cytoplasmic granule. Its function is as follows. Ribonuclease which shows a preference for the pyrimidines uridine and cytosine. Has potent antibacterial activity against a range of Gram-positive and Gram-negative bacteria, including P.aeruginosa, A.baumanii, M.luteus, S.aureus, E.faecalis, E.faecium, S.saprophyticus and E.coli. Causes loss of bacterial membrane integrity, and also promotes agglutination of Gram-negative bacteria. Probably contributes to urinary tract sterility. Bactericidal activity is independent of RNase activity. This is Ribonuclease K6 (RNASE6) from Papio hamadryas (Hamadryas baboon).